A 116-amino-acid chain; its full sequence is Proline-rich protein 9 (116 aa).

This Bos taurus (Bovine) protein is Proline-rich protein 9 (PRR9).